A 706-amino-acid chain; its full sequence is Zinc finger and BTB domain-containing protein 17 (706 aa).

One can recognise a BTB domain in the interval 1 to 12; that stretch reads LKSLTVLAESPV. A disordered region spans residues 32 to 194; it reads TAARVTQGDS…LLRSGTYSDR (163 aa). The segment covering 67–78 has biased composition (basic and acidic residues); it reads EPAEQPDAKEGP. Over residues 90-106 the composition is skewed to low complexity; it reads AAEASPAAVSPSRPQPA. The span at 134–148 shows a compositional bias: acidic residues; that stretch reads GKEEEGEAMVEDEEE. Polar residues predominate over residues 170-182; the sequence is SGSTDSGQENSGE. C2H2-type zinc fingers lie at residues 205–227, 233–255, 261–283, 289–311, 317–339, 345–367, 373–395, 401–423, 427–450, 457–479, 485–507, 513–536, and 618–640; these read HKCEDCGKEFTHTGNFKRHIRIH, FSCRECNKAFSDPAACKAHEKTH, YGCEECGKSYRLISLLNLHKKRH, YRCDDCGKLFTTSGNLKRHQLVH, YQCDYCGRSFSDPTSKMRHLETH, HKCPHCDKKFNQVGNLKAHLKIH, LKCRECGNEFTTSGNLKRHLRIH, YVCVHCQRQFADPGALQAHVPIH, KPCQCLICGKAFTQASSLIAHVRH, YVCERCGKRFVQSSQLANHIRHH, HKCTVCNKAFVNVGDLSKHIIIH, FLCDKCGRGFNRVDNLRSHVKTVH, and YACDSCGEKFLDATSLAQHVRIH. Residues 680–706 are disordered; it reads PRDSPQEAPAAPLAPVPLAGEGQAPAE. Over residues 687–698 the composition is skewed to low complexity; that stretch reads APAAPLAPVPLA.

It belongs to the krueppel C2H2-type zinc-finger protein family.

It localises to the nucleus. Functionally, transcription factor that can function as an activator or repressor depending on its binding partners, and by targeting negative regulators of cell cycle progression. Plays a critical role in early lymphocyte development, where it is essential to prevent apoptosis in lymphoid precursors, allowing them to survive in response to IL7 and undergo proper lineage commitment. Has been shown to bind to the promoters of adenovirus major late protein and cyclin D1 and activate transcription. Required for early embryonic development during gastrulation. Represses RB1 transcription. This chain is Zinc finger and BTB domain-containing protein 17 (ZBTB17), found in Gallus gallus (Chicken).